Reading from the N-terminus, the 465-residue chain is Chromosomal replication initiator protein DnaA (465 aa).

The tract at residues 1–84 is domain I, interacts with DnaA modulators; it reads MSLSLWQQCL…RFEVGSKPLV (84 aa). Residues 84–128 form a domain II region; sequence VQAISQPAQPHHKQVSAAPQQQVRSAPVRPSWDNSPAQAEHTYRS. Positions 91-120 are disordered; the sequence is AQPHHKQVSAAPQQQVRSAPVRPSWDNSPA. Positions 129 to 345 are domain III, AAA+ region; that stretch reads NVNPKHTFDN…GALNRVIANA (217 aa). Residues glycine 173, glycine 175, lysine 176, and threonine 177 each contribute to the ATP site. The tract at residues 346–465 is domain IV, binds dsDNA; it reads NFTGRSITID…FSNLIRTLSS (120 aa).

The protein belongs to the DnaA family. As to quaternary structure, oligomerizes as a right-handed, spiral filament on DNA at oriC.

It localises to the cytoplasm. Its function is as follows. Plays an essential role in the initiation and regulation of chromosomal replication. ATP-DnaA binds to the origin of replication (oriC) to initiate formation of the DNA replication initiation complex once per cell cycle. Binds the DnaA box (a 9 base pair repeat at the origin) and separates the double-stranded (ds)DNA. Forms a right-handed helical filament on oriC DNA; dsDNA binds to the exterior of the filament while single-stranded (ss)DNA is stabiized in the filament's interior. The ATP-DnaA-oriC complex binds and stabilizes one strand of the AT-rich DNA unwinding element (DUE), permitting loading of DNA polymerase. After initiation quickly degrades to an ADP-DnaA complex that is not apt for DNA replication. Binds acidic phospholipids. The polypeptide is Chromosomal replication initiator protein DnaA (Pectobacterium carotovorum subsp. carotovorum (strain PC1)).